Reading from the N-terminus, the 301-residue chain is Dihydroorotate dehydrogenase B (NAD(+)), catalytic subunit (301 aa).

Substrate is bound by residues Lys44, 68-72, and Asn122; that span reads NAMGL. 44-45 lines the FMN pocket; it reads KS. Asn122 lines the FMN pocket. Cys125 (nucleophile) is an active-site residue. The FMN site is built by Lys160 and Ile186. Residue 187–188 coordinates substrate; sequence NT. Residues Gly212, 238 to 239, and 260 to 261 each bind FMN; these read GG and GS.

Belongs to the dihydroorotate dehydrogenase family. Type 1 subfamily. In terms of assembly, heterotetramer of 2 PyrK and 2 PyrD type B subunits. FMN is required as a cofactor.

Its subcellular location is the cytoplasm. It carries out the reaction (S)-dihydroorotate + NAD(+) = orotate + NADH + H(+). It functions in the pathway pyrimidine metabolism; UMP biosynthesis via de novo pathway; orotate from (S)-dihydroorotate (NAD(+) route): step 1/1. In terms of biological role, catalyzes the conversion of dihydroorotate to orotate with NAD(+) as electron acceptor. The sequence is that of Dihydroorotate dehydrogenase B (NAD(+)), catalytic subunit (pyrD) from Methanocella arvoryzae (strain DSM 22066 / NBRC 105507 / MRE50).